Here is a 309-residue protein sequence, read N- to C-terminus: Cysteinyl leukotriene receptor 2 (309 aa).

Residues 1-26 lie on the Extracellular side of the membrane; the sequence is MEVTGTPSSYSNRNCTIENFKKEFYP. Residue Asn14 is glycosylated (N-linked (GlcNAc...) asparagine). Residues 27 to 47 traverse the membrane as a helical segment; that stretch reads IIYLIIFFWGALGNGFSIYVF. The Cytoplasmic segment spans residues 48–56; sequence LQTCKKSTS. Residues 57–77 form a helical membrane-spanning segment; the sequence is VNVFMLNLATSDFLFISTLPF. Topologically, residues 78–98 are extracellular; the sequence is RADYYFRGSNWIFGDLACRVM. Cys95 and Cys171 are oxidised to a cystine. A helical transmembrane segment spans residues 99–119; that stretch reads SYSLYVNMYTSIYFLTVLSVV. Over 120 to 138 the chain is Cytoplasmic; sequence RFLATVHPFRMFHVTSVRS. The helical transmembrane segment at 139–159 threads the bilayer; it reads AWILCGIIWVFIMASSALLLV. At 160-187 the chain is on the extracellular side; that stretch reads NGQEEKDNIISCLELSPQKFKSLLIMNH. A helical transmembrane segment spans residues 188 to 208; it reads IAVAVGFLLPFLTLTVCYLLI. Over 209–229 the chain is Cytoplasmic; that stretch reads IRILLKAEIPESGPRAAHRKA. A helical membrane pass occupies residues 230–250; the sequence is LTTIVIAMITFLLCFLPYHAL. Residues 251–271 lie on the Extracellular side of the membrane; it reads RTLHLVTWDKDSCGDVLHKAT. Residues 272-292 traverse the membrane as a helical segment; the sequence is VITLTMAAANSCFNPFLYYFA. Residues 293 to 309 lie on the Cytoplasmic side of the membrane; it reads GENFKARLRAIFSKVHL.

Belongs to the G-protein coupled receptor 1 family. In terms of tissue distribution, widely expressed at low levels, with highest expression in the spleen, thymus and adrenal gland, and lower in the kidney, brain and peripheral blood leukocytes.

The protein localises to the cell membrane. Functionally, receptor for cysteinyl leukotrienes. The response is mediated via a G-protein that activates a phosphatidylinositol-calcium second messenger system. The rank order of affinities for the leukotrienes is LTC4 = LTD4 &gt;&gt; LTE4. The chain is Cysteinyl leukotriene receptor 2 (Cysltr2) from Mus musculus (Mouse).